Reading from the N-terminus, the 197-residue chain is Guanylate kinase (197 aa).

A Guanylate kinase-like domain is found at 6–191 (SKLIILSGPS…CVAQIEKIIS (186 aa)). An ATP-binding site is contributed by 13–20 (GPSGVGKG).

It belongs to the guanylate kinase family.

The protein localises to the cytoplasm. The enzyme catalyses GMP + ATP = GDP + ADP. Its function is as follows. Essential for recycling GMP and indirectly, cGMP. The protein is Guanylate kinase of Mesomycoplasma hyopneumoniae (strain 7448) (Mycoplasma hyopneumoniae).